Here is a 124-residue protein sequence, read N- to C-terminus: Ribosome-binding factor A (124 aa).

It belongs to the RbfA family. As to quaternary structure, monomer. Binds 30S ribosomal subunits, but not 50S ribosomal subunits or 70S ribosomes.

Its subcellular location is the cytoplasm. In terms of biological role, one of several proteins that assist in the late maturation steps of the functional core of the 30S ribosomal subunit. Associates with free 30S ribosomal subunits (but not with 30S subunits that are part of 70S ribosomes or polysomes). Required for efficient processing of 16S rRNA. May interact with the 5'-terminal helix region of 16S rRNA. The sequence is that of Ribosome-binding factor A from Thiobacillus denitrificans (strain ATCC 25259 / T1).